We begin with the raw amino-acid sequence, 155 residues long: Small ribosomal subunit protein uS7c (155 aa).

It belongs to the universal ribosomal protein uS7 family. Part of the 30S ribosomal subunit.

The protein localises to the plastid. Its subcellular location is the chloroplast. Its function is as follows. One of the primary rRNA binding proteins, it binds directly to 16S rRNA where it nucleates assembly of the head domain of the 30S subunit. The polypeptide is Small ribosomal subunit protein uS7c (rps7) (Saruma henryi (Upright wild ginger)).